Reading from the N-terminus, the 140-residue chain is ATP synthase epsilon chain (140 aa).

It belongs to the ATPase epsilon chain family. F-type ATPases have 2 components, CF(1) - the catalytic core - and CF(0) - the membrane proton channel. CF(1) has five subunits: alpha(3), beta(3), gamma(1), delta(1), epsilon(1). CF(0) has three main subunits: a, b and c.

It is found in the cell inner membrane. Its function is as follows. Produces ATP from ADP in the presence of a proton gradient across the membrane. This chain is ATP synthase epsilon chain, found in Nitrosococcus oceani (strain ATCC 19707 / BCRC 17464 / JCM 30415 / NCIMB 11848 / C-107).